Here is a 446-residue protein sequence, read N- to C-terminus: Signal recognition particle 54 kDa protein (446 aa).

GTP contacts are provided by residues 103–110, 185–189, and 245–248; these read GVQGTGKT, DTAGR, and TKMD.

Belongs to the GTP-binding SRP family. SRP54 subfamily. As to quaternary structure, part of the signal recognition particle protein translocation system, which is composed of SRP and FtsY. Archaeal SRP consists of a 7S RNA molecule of 300 nucleotides and two protein subunits: SRP54 and SRP19.

Its subcellular location is the cytoplasm. It carries out the reaction GTP + H2O = GDP + phosphate + H(+). Functionally, involved in targeting and insertion of nascent membrane proteins into the cytoplasmic membrane. Binds to the hydrophobic signal sequence of the ribosome-nascent chain (RNC) as it emerges from the ribosomes. The SRP-RNC complex is then targeted to the cytoplasmic membrane where it interacts with the SRP receptor FtsY. This chain is Signal recognition particle 54 kDa protein, found in Metallosphaera sedula (strain ATCC 51363 / DSM 5348 / JCM 9185 / NBRC 15509 / TH2).